We begin with the raw amino-acid sequence, 902 residues long: Respiratory nitrate reductase alpha chain (902 aa).

The [4Fe-4S] cluster site is built by H29, C33, and C37.

Belongs to the prokaryotic molybdopterin-containing oxidoreductase family. In terms of assembly, heterotrimer composed of an alpha, a beta and a gamma chain. Alpha and beta are catalytic chains; gamma chains are involved in binding the enzyme complex to the cytoplasmic membrane. Requires [4Fe-4S] cluster as cofactor. It depends on Mo-bis(molybdopterin guanine dinucleotide) as a cofactor.

It is found in the cell membrane. Its subcellular location is the cytoplasm. The catalysed reaction is nitrate + a quinol = a quinone + nitrite + H2O. With respect to regulation, inhibited by micromolar concentrations of azide. Its function is as follows. The nitrate reductase enzyme complex allows Bradyrhizobium sp. USDA 3045 to use nitrate as an electron acceptor during anaerobic growth. The alpha chain is the actual site of nitrate reduction. The protein is Respiratory nitrate reductase alpha chain (narG) of Bradyrhizobium sp.